The chain runs to 606 residues: UvrABC system protein C (606 aa).

Positions 18–96 (SQPGVYRMMN…IKSLNPRYNI (79 aa)) constitute a GIY-YIG domain. One can recognise a UVR domain in the interval 205–240 (TEVLKSITRKMHEAAEEQEYEQAALFRDQIQSLRKI).

The protein belongs to the UvrC family. Interacts with UvrB in an incision complex.

The protein localises to the cytoplasm. Functionally, the UvrABC repair system catalyzes the recognition and processing of DNA lesions. UvrC both incises the 5' and 3' sides of the lesion. The N-terminal half is responsible for the 3' incision and the C-terminal half is responsible for the 5' incision. This is UvrABC system protein C from Nitrosospira multiformis (strain ATCC 25196 / NCIMB 11849 / C 71).